The following is a 315-amino-acid chain: uncharacterized protein (315 aa).

The next 3 membrane-spanning stretches (helical) occupy residues 18–38, 202–222, and 244–264; these read IWFI…IISG, ILAI…LAGI, and LIYA…VIVL. The disordered stretch occupies residues 288–315; that stretch reads VCSTGNRSSGSTDQDISTTKQQSQEAVA.

It localises to the membrane. This is an uncharacterized protein from Saccharomyces cerevisiae (strain ATCC 204508 / S288c) (Baker's yeast).